The primary structure comprises 74 residues: Kappa-scoloptoxin(07)-Ssm2f (74 aa).

The N-terminal stretch at 1–19 is a signal peptide; that stretch reads MLVFYAILFVTVFSNTVMG. Residues 20-41 constitute a propeptide that is removed on maturation; that stretch reads ATIDKPIPKPIFREAIEEMEVN.

The protein belongs to the scoloptoxin-07 family. In terms of processing, contains 3 disulfide bonds. In terms of tissue distribution, expressed by the venom gland.

Its subcellular location is the secreted. Inhibits voltage-gated potassium channels. This Scolopendra mutilans (Chinese red-headed centipede) protein is Kappa-scoloptoxin(07)-Ssm2f.